The following is a 404-amino-acid chain: Chorismate synthase (404 aa).

Arg-43 and Arg-49 together coordinate NADP(+). FMN contacts are provided by residues 138 to 140 (RAS), 259 to 260 (QA), Gly-303, 318 to 322 (KPIST), and Arg-344.

It belongs to the chorismate synthase family. In terms of assembly, homotetramer. Requires FMNH2 as cofactor.

It carries out the reaction 5-O-(1-carboxyvinyl)-3-phosphoshikimate = chorismate + phosphate. It functions in the pathway metabolic intermediate biosynthesis; chorismate biosynthesis; chorismate from D-erythrose 4-phosphate and phosphoenolpyruvate: step 7/7. Its function is as follows. Catalyzes the anti-1,4-elimination of the C-3 phosphate and the C-6 proR hydrogen from 5-enolpyruvylshikimate-3-phosphate (EPSP) to yield chorismate, which is the branch point compound that serves as the starting substrate for the three terminal pathways of aromatic amino acid biosynthesis. This reaction introduces a second double bond into the aromatic ring system. The sequence is that of Chorismate synthase from Mycolicibacterium paratuberculosis (strain ATCC BAA-968 / K-10) (Mycobacterium paratuberculosis).